A 104-amino-acid chain; its full sequence is uncharacterized protein (104 aa).

A signal peptide spans 1–18; that stretch reads MGVEGMWNVFLFSLQVAA. A glycan (N-linked (GlcNAc...) asparagine; by host) is linked at Asn27.

This is an uncharacterized protein from Fowl adenovirus A serotype 1 (strain CELO / Phelps) (FAdV-1).